Here is a 302-residue protein sequence, read N- to C-terminus: Sulfate adenylyltransferase subunit 2 (302 aa).

This sequence belongs to the PAPS reductase family. CysD subfamily. In terms of assembly, heterodimer composed of CysD, the smaller subunit, and CysN.

It catalyses the reaction sulfate + ATP + H(+) = adenosine 5'-phosphosulfate + diphosphate. It functions in the pathway sulfur metabolism; hydrogen sulfide biosynthesis; sulfite from sulfate: step 1/3. In terms of biological role, with CysN forms the ATP sulfurylase (ATPS) that catalyzes the adenylation of sulfate producing adenosine 5'-phosphosulfate (APS) and diphosphate, the first enzymatic step in sulfur assimilation pathway. APS synthesis involves the formation of a high-energy phosphoric-sulfuric acid anhydride bond driven by GTP hydrolysis by CysN coupled to ATP hydrolysis by CysD. The protein is Sulfate adenylyltransferase subunit 2 of Citrobacter koseri (strain ATCC BAA-895 / CDC 4225-83 / SGSC4696).